Reading from the N-terminus, the 409-residue chain is Autophagy-related protein 21 (409 aa).

4 WD repeats span residues 1–35 (MKVL…KCFE), 221–261 (VHKG…TLQS), 273–312 (TRPC…QQNK), and 361–402 (KVDD…GECI). A L/FRRG motif motif is present at residues 269-273 (FRRGT).

This sequence belongs to the WD repeat PROPPIN family.

It is found in the cytoplasm. The protein localises to the membrane. Its subcellular location is the vacuole membrane. Required for cytoplasm to vacuole transport (Cvt) vesicles formation and mitophagy. Involved in binding of phosphatidylethanolamine to ATG8 and in recruitment of ATG8 and ATG5 to the pre-autophagosomal structure. Protects ATG8 from ARG4-mediated cleavage. The chain is Autophagy-related protein 21 (ATG21) from Eremothecium gossypii (strain ATCC 10895 / CBS 109.51 / FGSC 9923 / NRRL Y-1056) (Yeast).